A 385-amino-acid polypeptide reads, in one-letter code: Cytochrome b (385 aa).

The next 4 helical transmembrane spans lie at 32–52 (FGSL…TLAM), 76–98 (WLVR…LHIG), 113–133 (TWAI…LGYV), and 179–199 (FFAL…MHLI). Heme b contacts are provided by His82 and His96. Heme b-binding residues include His183 and His197. A ubiquinone is bound at residue His202. 4 helical membrane-spanning segments follow: residues 226–246 (FIFK…IFVF), 290–310 (LLGV…PITD), 322–342 (LSKV…QIGA), and 349–369 (FIEL…VIVP).

It belongs to the cytochrome b family. Fungal cytochrome b-c1 complex contains 10 subunits; 3 respiratory subunits, 2 core proteins and 5 low-molecular weight proteins. Cytochrome b-c1 complex is a homodimer. Heme b is required as a cofactor.

The protein localises to the mitochondrion inner membrane. Functionally, component of the ubiquinol-cytochrome c reductase complex (complex III or cytochrome b-c1 complex) that is part of the mitochondrial respiratory chain. The b-c1 complex mediates electron transfer from ubiquinol to cytochrome c. Contributes to the generation of a proton gradient across the mitochondrial membrane that is then used for ATP synthesis. The polypeptide is Cytochrome b (cob) (Aspergillus tubingensis).